The chain runs to 176 residues: Large ribosomal subunit protein bL28m (176 aa).

A mitochondrion-targeting transit peptide spans 1 to 8 (MASKLLRK).

It belongs to the bacterial ribosomal protein bL28 family. In terms of assembly, component of the mitochondrial large ribosomal subunit (mt-LSU). Mature yeast 74S mitochondrial ribosomes consist of a small (37S) and a large (54S) subunit. The 37S small subunit contains a 15S ribosomal RNA (15S mt-rRNA) and at least 32 different proteins. The 54S large subunit contains a 21S rRNA (21S mt-rRNA) and at least 45 different proteins.

The protein localises to the cytoplasm. It is found in the mitochondrion. In terms of biological role, component of the mitochondrial ribosome (mitoribosome), a dedicated translation machinery responsible for the synthesis of mitochondrial genome-encoded proteins, including at least some of the essential transmembrane subunits of the mitochondrial respiratory chain. The mitoribosomes are attached to the mitochondrial inner membrane and translation products are cotranslationally integrated into the membrane. In Schizosaccharomyces pombe (strain 972 / ATCC 24843) (Fission yeast), this protein is Large ribosomal subunit protein bL28m (mrpl24).